A 524-amino-acid polypeptide reads, in one-letter code: Nif-specific regulatory protein (524 aa).

An a domain region spans residues 1–182 (MIHKSDSDTT…AQTIRLMILP (182 aa)). In terms of domain architecture, GAF spans 35 to 176 (EASKTLQEVL…TVANLIAQTI (142 aa)). Residues 212 to 481 (MVGKSPAMRQ…DGWLDNSLDE (270 aa)) enclose the Sigma-54 factor interaction domain. ATP contacts are provided by residues 240–247 (GESGTGKE) and 303–312 (ADGGTLFLDE). A C-terminal DNA-binding domain region spans residues 482–524 (RQRLIAALEKAGWVQAKAARLLGMTPRQVAYRIQIMDITMPRL). The H-T-H motif DNA-binding region spans 496–515 (QAKAARLLGMTPRQVAYRIQ).

In terms of assembly, interacts with sigma-54.

In terms of biological role, required for activation of most nif operons, which are directly involved in nitrogen fixation. The chain is Nif-specific regulatory protein (nifA) from Klebsiella pneumoniae.